A 307-amino-acid chain; its full sequence is MKITVEDIIKDLELEVLVQGEKDKEIKTSDINRPGLQFAGFYSYFANSRVQVIGNAEWSFLKNMPVELIRKRMKKFFEFDTPCIIIARDLEPHPQLIKNAKLHKRWVLRSKLLTTKVVTKLMNYLDAKLAPETRMHGVLVDVYGIGMLITGESGIGKSETALELIKRGHRLVADDAVDIKEIDGVLRGTSPYITSGMLEVRGMGIIDIPALYGLSSVLQKKTIHLVIYLEQWKPDRNYDRLGIDDDFLEILNVPVKKLTVPIRPGRNLAVIIEAAAANYRYGLMCKVSPVETINNRMESMVRNESKR.

Active-site residues include H136 and K157. 151 to 158 (GESGIGKS) is a binding site for ATP. S158 is a binding site for Mg(2+). The active-site Proton acceptor; for phosphorylation activity. Proton donor; for dephosphorylation activity is D175. The interval 198 to 207 (LEVRGMGIID) is important for the catalytic mechanism of both phosphorylation and dephosphorylation. E199 is a Mg(2+) binding site. R240 is a catalytic residue. Positions 261-266 (PIRPGR) are important for the catalytic mechanism of dephosphorylation.

The protein belongs to the HPrK/P family. As to quaternary structure, homohexamer. Mg(2+) serves as cofactor.

The catalysed reaction is [HPr protein]-L-serine + ATP = [HPr protein]-O-phospho-L-serine + ADP + H(+). The enzyme catalyses [HPr protein]-O-phospho-L-serine + phosphate + H(+) = [HPr protein]-L-serine + diphosphate. Its function is as follows. Catalyzes the ATP- as well as the pyrophosphate-dependent phosphorylation of a specific serine residue in HPr, a phosphocarrier protein of the phosphoenolpyruvate-dependent sugar phosphotransferase system (PTS). HprK/P also catalyzes the pyrophosphate-producing, inorganic phosphate-dependent dephosphorylation (phosphorolysis) of seryl-phosphorylated HPr (P-Ser-HPr). The two antagonistic activities of HprK/P are regulated by several intracellular metabolites, which change their concentration in response to the absence or presence of rapidly metabolisable carbon sources (glucose, fructose, etc.) in the growth medium. Therefore, by controlling the phosphorylation state of HPr, HPrK/P is a sensor enzyme that plays a major role in the regulation of carbon metabolism and sugar transport: it mediates carbon catabolite repression (CCR), and regulates PTS-catalyzed carbohydrate uptake and inducer exclusion. The chain is HPr kinase/phosphorylase from Clostridium novyi (strain NT).